A 554-amino-acid chain; its full sequence is Undecaprenyl phosphate-alpha-4-amino-4-deoxy-L-arabinose arabinosyl transferase (554 aa).

Helical transmembrane passes span 4–24, 87–107, 115–135, 178–198, 206–226, 262–282, 293–313, 315–335, 351–371, 384–404, and 414–434; these read LKDSGAALLALFFVLVYLLPV, FGSIFSTALSAVLVYWLATLL, VLATLIYLSFLLVFGIGTYAV, FMTKGFLALAVPVIAVLPIVI, LVVFGPIAIVCAVLLSLPWAL, YLPILCIGVLPWLGLLPGALF, ELFFLLSWVVMPLLFFSVAKG, LPTYILPCMAPLSLLMAAYAT, VINLLFGVACALVIVVIGLGL, QKVWLGVLAFAGWGVTGFITL, and AAACPLLFILLVGYLIPQQVV.

It belongs to the glycosyltransferase 83 family.

Its subcellular location is the cell inner membrane. It carries out the reaction 4-amino-4-deoxy-alpha-L-arabinopyranosyl di-trans,octa-cis-undecaprenyl phosphate + lipid IVA = lipid IIA + di-trans,octa-cis-undecaprenyl phosphate.. Its pathway is lipopolysaccharide metabolism; 4-amino-4-deoxy-beta-L-arabinose-lipid A biosynthesis. Its function is as follows. Catalyzes the transfer of the L-Ara4N moiety of the glycolipid undecaprenyl phosphate-alpha-L-Ara4N to lipid A. The modified arabinose is attached to lipid A and is required for resistance to polymyxin and cationic antimicrobial peptides. The sequence is that of Undecaprenyl phosphate-alpha-4-amino-4-deoxy-L-arabinose arabinosyl transferase from Yersinia pseudotuberculosis serotype O:1b (strain IP 31758).